Reading from the N-terminus, the 384-residue chain is Deoxyguanosinetriphosphate triphosphohydrolase-like protein (384 aa).

The region spanning 63–199 (RLTHSLEVAT…ASLADDISYI (137 aa)) is the HD domain.

The protein belongs to the dGTPase family. Type 2 subfamily.

In Rickettsia typhi (strain ATCC VR-144 / Wilmington), this protein is Deoxyguanosinetriphosphate triphosphohydrolase-like protein.